A 183-amino-acid polypeptide reads, in one-letter code: Large ribosomal subunit protein uL22 (183 aa).

Belongs to the universal ribosomal protein uL22 family.

This Podocoryna carnea (Hydrozoan) protein is Large ribosomal subunit protein uL22 (RPL17).